The chain runs to 334 residues: Glutaminase (334 aa).

The substrate site is built by Ser-76, Asn-126, Glu-170, Asn-177, Tyr-201, Tyr-253, and Val-271.

Belongs to the glutaminase family. As to quaternary structure, homotetramer.

The catalysed reaction is L-glutamine + H2O = L-glutamate + NH4(+). The chain is Glutaminase from Trichormus variabilis (strain ATCC 29413 / PCC 7937) (Anabaena variabilis).